Here is a 115-residue protein sequence, read N- to C-terminus: NADH-ubiquinone oxidoreductase chain 3 (115 aa).

3 helical membrane passes run 3–23 (FALI…ITFW), 55–75 (FFLV…LLPL), and 84–104 (LPLM…SLAY).

This sequence belongs to the complex I subunit 3 family. As to quaternary structure, core subunit of respiratory chain NADH dehydrogenase (Complex I) which is composed of 45 different subunits. Interacts with TMEM186. Interacts with TMEM242.

It localises to the mitochondrion inner membrane. It catalyses the reaction a ubiquinone + NADH + 5 H(+)(in) = a ubiquinol + NAD(+) + 4 H(+)(out). Core subunit of the mitochondrial membrane respiratory chain NADH dehydrogenase (Complex I) which catalyzes electron transfer from NADH through the respiratory chain, using ubiquinone as an electron acceptor. Essential for the catalytic activity of complex I. This chain is NADH-ubiquinone oxidoreductase chain 3, found in Gorilla gorilla gorilla (Western lowland gorilla).